A 141-amino-acid polypeptide reads, in one-letter code: Nucleoside diphosphate kinase (141 aa).

The ATP site is built by K11, F59, R87, T93, R104, and N114. The active-site Pros-phosphohistidine intermediate is the H117.

Belongs to the NDK family. As to quaternary structure, homotetramer. It depends on Mg(2+) as a cofactor.

It localises to the cytoplasm. The catalysed reaction is a 2'-deoxyribonucleoside 5'-diphosphate + ATP = a 2'-deoxyribonucleoside 5'-triphosphate + ADP. It catalyses the reaction a ribonucleoside 5'-diphosphate + ATP = a ribonucleoside 5'-triphosphate + ADP. Functionally, major role in the synthesis of nucleoside triphosphates other than ATP. The ATP gamma phosphate is transferred to the NDP beta phosphate via a ping-pong mechanism, using a phosphorylated active-site intermediate. This chain is Nucleoside diphosphate kinase, found in Histophilus somni (strain 129Pt) (Haemophilus somnus).